The sequence spans 591 residues: Cytidine monophosphate-N-acetylneuraminic acid hydroxylase (591 aa).

The 99-residue stretch at 12–110 (LEAEDVRNLK…AVLSETDGSL (99 aa)) folds into the Rieske domain. The [2Fe-2S] cluster site is built by cysteine 52, histidine 54, cysteine 73, and histidine 76.

This sequence belongs to the CMP-Neu5Ac hydroxylase family. [2Fe-2S] cluster serves as cofactor.

Its subcellular location is the cytoplasm. The catalysed reaction is CMP-N-acetyl-beta-neuraminate + 2 Fe(II)-[cytochrome b5] + O2 + 2 H(+) = CMP-N-glycoloyl-beta-neuraminate + 2 Fe(III)-[cytochrome b5] + H2O. It participates in amino-sugar metabolism; N-acetylneuraminate metabolism. Functionally, sialic acids are components of carbohydrate chains of glycoconjugates and are involved in cell-cell recognition and cell-pathogen interactions. Catalyzes the conversion of CMP-N-acetylneuraminic acid (CMP-Neu5Ac) into its hydroxylated derivative CMP-N-glycolylneuraminic acid (CMP-Neu5Gc), a sialic acid abundantly expressed at the surface of many cells. The chain is Cytidine monophosphate-N-acetylneuraminic acid hydroxylase (cmah) from Danio rerio (Zebrafish).